We begin with the raw amino-acid sequence, 311 residues long: Dihydroorotate dehydrogenase B (NAD(+)), catalytic subunit (311 aa).

Residues Ser-24 and Lys-48 to Ala-49 each bind FMN. Substrate is bound by residues Lys-48 and Asn-72–Leu-76. Residues Asn-104 and Asn-132 each contribute to the FMN site. A substrate-binding site is contributed by Asn-132. Cys-135 serves as the catalytic Nucleophile. FMN is bound by residues Lys-170 and Ile-196. A substrate-binding site is contributed by Asn-197–Thr-198. FMN is bound by residues Gly-222, Gly-248–Gly-249, and Gly-270–Thr-271.

Belongs to the dihydroorotate dehydrogenase family. Type 1 subfamily. As to quaternary structure, heterotetramer of 2 PyrK and 2 PyrD type B subunits. FMN serves as cofactor.

It is found in the cytoplasm. It catalyses the reaction (S)-dihydroorotate + NAD(+) = orotate + NADH + H(+). It participates in pyrimidine metabolism; UMP biosynthesis via de novo pathway; orotate from (S)-dihydroorotate (NAD(+) route): step 1/1. Functionally, catalyzes the conversion of dihydroorotate to orotate with NAD(+) as electron acceptor. Cannot use fumarate as an electron acceptor. The polypeptide is Dihydroorotate dehydrogenase B (NAD(+)), catalytic subunit (pyrDB) (Lactococcus lactis subsp. cremoris (strain MG1363)).